The chain runs to 1197 residues: Sensor protein EvgS (1197 aa).

Positions 1–21 are cleaved as a signal peptide; the sequence is MKFLPYIFLLCCGLWSTISFA. The Cytoplasmic portion of the chain corresponds to 22-325; that stretch reads DEDYIEYRGI…SMTDENGSVR (304 aa). The helical transmembrane segment at 326-346 threads the bilayer; that stretch reads GVMGDILNIITLQTGLNFSPI. Topologically, residues 347-537 are periplasmic; the sequence is TVSHNIHAGT…TWDLYSEQFY (191 aa). Residues 538-558 form a helical membrane-spanning segment; sequence IVTTLSVLLVGSSLLWGFYLL. Topologically, residues 559–1197 are cytoplasmic; that stretch reads RSVRRRKVIQ…EIAVFCQQNN (639 aa). Residues 718–938 form the Histidine kinase domain; it reads TMSHEIRTPI…TFTITIPVEI (221 aa). At His721 the chain carries Phosphohistidine; by autocatalysis. The Response regulatory domain maps to 960-1074; the sequence is SILIADDHPT…VLKTHLSQLH (115 aa). The residue at position 1009 (Asp1009) is a 4-aspartylphosphate. The region spanning 1098-1197 is the HPt domain; it reads DLQLMQEILM…EIAVFCQQNN (100 aa). Position 1137 is a phosphohistidine (His1137).

Activation requires a sequential transfer of a phosphate group from a His in the primary transmitter domain, to an Asp in the receiver domain and to a His in the secondary transmitter domain.

It is found in the cell inner membrane. The enzyme catalyses ATP + protein L-histidine = ADP + protein N-phospho-L-histidine.. In terms of biological role, member of the two-component regulatory system EvgS/EvgA. Phosphorylates EvgA via a four-step phosphorelay in response to environmental signals. This is Sensor protein EvgS (evgS) from Escherichia coli O157:H7.